A 351-amino-acid polypeptide reads, in one-letter code: 3-dehydroquinate synthase (351 aa).

NAD(+)-binding positions include 60-65 (DGEEYK), 94-98 (GVISD), 118-119 (TT), lysine 131, lysine 140, and 158-161 (FLKT). Residues glutamate 173, histidine 239, and histidine 256 each contribute to the Zn(2+) site.

This sequence belongs to the sugar phosphate cyclases superfamily. Dehydroquinate synthase family. It depends on Co(2+) as a cofactor. The cofactor is Zn(2+). Requires NAD(+) as cofactor.

It is found in the cytoplasm. The catalysed reaction is 7-phospho-2-dehydro-3-deoxy-D-arabino-heptonate = 3-dehydroquinate + phosphate. It functions in the pathway metabolic intermediate biosynthesis; chorismate biosynthesis; chorismate from D-erythrose 4-phosphate and phosphoenolpyruvate: step 2/7. Its function is as follows. Catalyzes the conversion of 3-deoxy-D-arabino-heptulosonate 7-phosphate (DAHP) to dehydroquinate (DHQ). This is 3-dehydroquinate synthase from Campylobacter jejuni subsp. doylei (strain ATCC BAA-1458 / RM4099 / 269.97).